Reading from the N-terminus, the 359-residue chain is Mannonate dehydratase (359 aa).

Belongs to the mannonate dehydratase family. Requires Fe(2+) as cofactor. The cofactor is Mn(2+).

The enzyme catalyses D-mannonate = 2-dehydro-3-deoxy-D-gluconate + H2O. The protein operates within carbohydrate metabolism; pentose and glucuronate interconversion. In terms of biological role, catalyzes the dehydration of D-mannonate. This Moorella thermoacetica (strain ATCC 39073 / JCM 9320) protein is Mannonate dehydratase.